The following is a 678-amino-acid chain: NADPH--cytochrome P450 reductase (678 aa).

The residue at position 2 (Gly-2) is an N-acetylglycine. The Lumenal segment spans residues 2 to 22 (GDSNVDTGTTTSEMVAEEVSL). Residues 23-43 (FSATDMVLFSLIVGLLTYWFI) traverse the membrane as a helical segment. Topologically, residues 44 to 678 (FRKKKDEVPE…KGRYSLDVWS (635 aa)) are cytoplasmic. Ser-63 carries the post-translational modification Phosphoserine. The Flavodoxin-like domain occupies 80–224 (IIVFYGSQTG…DFITWREQFW (145 aa)). Residues 86–91 (SQTGTA), 138–141 (ATYG), 173–182 (LGNKTYEHFN), and Asp-208 contribute to the FMN site. An FAD-binding FR-type domain is found at 279 to 521 (KNPFLAVVTT…FVRKSQFRLP (243 aa)). Arg-298 contributes to the NADP(+) binding site. Residues Arg-424, 454 to 457 (RYYS), 472 to 474 (CAV), Tyr-478, and 488 to 491 (GVAT) contribute to the FAD site. NADP(+) contacts are provided by residues Thr-535, 596–597 (SR), 602–606 (KVYVQ), and Asp-639. FAD is bound at residue Trp-677.

The protein belongs to the NADPH--cytochrome P450 reductase family. It in the N-terminal section; belongs to the flavodoxin family. In the C-terminal section; belongs to the flavoprotein pyridine nucleotide cytochrome reductase family. Requires FAD as cofactor. The cofactor is FMN.

The protein localises to the endoplasmic reticulum membrane. The enzyme catalyses 2 oxidized [cytochrome P450] + NADPH = 2 reduced [cytochrome P450] + NADP(+) + H(+). In terms of biological role, this enzyme is required for electron transfer from NADP to cytochrome P450 in microsomes. It can also provide electron transfer to heme oxygenase and cytochrome B5. The chain is NADPH--cytochrome P450 reductase from Sus scrofa (Pig).